Here is a 75-residue protein sequence, read N- to C-terminus: Small ribosomal subunit protein bS18 (75 aa).

This sequence belongs to the bacterial ribosomal protein bS18 family. As to quaternary structure, part of the 30S ribosomal subunit. Forms a tight heterodimer with protein bS6.

In terms of biological role, binds as a heterodimer with protein bS6 to the central domain of the 16S rRNA, where it helps stabilize the platform of the 30S subunit. The polypeptide is Small ribosomal subunit protein bS18 (Methylobacillus flagellatus (strain ATCC 51484 / DSM 6875 / VKM B-1610 / KT)).